A 694-amino-acid chain; its full sequence is Elongation factor G (694 aa).

One can recognise a tr-type G domain in the interval 9-288 (SKIRNIGIMA…VIVKWLPSPK (280 aa)). GTP is bound by residues 18-25 (AHIDAGKT), 82-86 (DTPGH), and 136-139 (NKMD).

Belongs to the TRAFAC class translation factor GTPase superfamily. Classic translation factor GTPase family. EF-G/EF-2 subfamily.

The protein resides in the cytoplasm. Its function is as follows. Catalyzes the GTP-dependent ribosomal translocation step during translation elongation. During this step, the ribosome changes from the pre-translocational (PRE) to the post-translocational (POST) state as the newly formed A-site-bound peptidyl-tRNA and P-site-bound deacylated tRNA move to the P and E sites, respectively. Catalyzes the coordinated movement of the two tRNA molecules, the mRNA and conformational changes in the ribosome. This chain is Elongation factor G, found in Chlamydia abortus (strain DSM 27085 / S26/3) (Chlamydophila abortus).